The primary structure comprises 261 residues: Small ribosomal subunit protein eS1 (261 aa).

Residues 1-18 show a composition bias toward basic residues; the sequence is MAVGKNKRISKGKKGGKK. A disordered region spans residues 1-23; that stretch reads MAVGKNKRISKGKKGGKKKAADP.

The protein belongs to the eukaryotic ribosomal protein eS1 family. Component of the small ribosomal subunit. Mature ribosomes consist of a small (40S) and a large (60S) subunit. The 40S subunit contains about 33 different proteins and 1 molecule of RNA (18S). The 60S subunit contains about 49 different proteins and 3 molecules of RNA (25S, 5.8S and 5S).

The protein resides in the cytoplasm. The polypeptide is Small ribosomal subunit protein eS1 (cyc07) (Nicotiana tabacum (Common tobacco)).